Here is a 252-residue protein sequence, read N- to C-terminus: Imidazole glycerol phosphate synthase subunit HisF (252 aa).

Active-site residues include Asp-12 and Asp-131.

This sequence belongs to the HisA/HisF family. Heterodimer of HisH and HisF.

The protein localises to the cytoplasm. The catalysed reaction is 5-[(5-phospho-1-deoxy-D-ribulos-1-ylimino)methylamino]-1-(5-phospho-beta-D-ribosyl)imidazole-4-carboxamide + L-glutamine = D-erythro-1-(imidazol-4-yl)glycerol 3-phosphate + 5-amino-1-(5-phospho-beta-D-ribosyl)imidazole-4-carboxamide + L-glutamate + H(+). The protein operates within amino-acid biosynthesis; L-histidine biosynthesis; L-histidine from 5-phospho-alpha-D-ribose 1-diphosphate: step 5/9. IGPS catalyzes the conversion of PRFAR and glutamine to IGP, AICAR and glutamate. The HisF subunit catalyzes the cyclization activity that produces IGP and AICAR from PRFAR using the ammonia provided by the HisH subunit. The polypeptide is Imidazole glycerol phosphate synthase subunit HisF (Thermus thermophilus (strain ATCC BAA-163 / DSM 7039 / HB27)).